The following is a 462-amino-acid chain: Alkaline ceramidase TOD1 (462 aa).

Topologically, residues 1–18 are cytoplasmic; sequence MGKFITTTLSPPLYARSK. A helical transmembrane segment spans residues 19 to 39; it reads LLCFSLLYLFSTIFLFLYVSL. The Lumenal segment spans residues 40–462; it reads SRNQCIFRYS…CKNYLTDMWG (423 aa). N-linked (GlcNAc...) asparagine glycans are attached at residues asparagine 121, asparagine 132, and asparagine 449.

The protein belongs to the alkaline ceramidase family. As to expression, preferentially expressed in pollen grains, pollen tubes and silique guard cells, but barely detectable in roots, stems and leaves.

Its subcellular location is the golgi apparatus membrane. The enzyme catalyses an N-acylsphing-4-enine + H2O = sphing-4-enine + a fatty acid. It participates in lipid metabolism. Endoplasmic reticulum ceramidase that catalyzes the hydrolysis of ceramides into sphingosine and free fatty acids at alkaline pH (e.g. pH 9.5). Inactive on phytoceramide. Involved in the regulation of turgor pressure in guard cells and pollen tubes. The chain is Alkaline ceramidase TOD1 from Arabidopsis thaliana (Mouse-ear cress).